A 504-amino-acid polypeptide reads, in one-letter code: MVAPGSVRSRLGAVFPFLLVLVDLQYEGAECGVNADVEKHLELGKKLLAAGQLADALSQFHAAVDGDPDNYIAYYRRATVFLAMGKSKAALPDLTRVIELKMDFTAARLQRGHLLLKQGRLAEAEDDFKKVLKSNPSENEEKEAQSQLVKADEMQRLRAQALDAFDSADYTAAITFLDEILEVCVWDAELRELRAECFIKEGEPRKAISDLKAASKLKNDNTEAFYKISILYYQLGDHELSLSEVRECLKLDQDHKRCFAHYKQVKKLNKLIGSAEELIRDGRYTDATSKYESVMKAEPSVAEYTVRSKERICHCFSKDEKPVEAIKICSEVLQLEPDNVNALKDRAEAYLIEEMYDEAIQDYEAAQEQNENDQQIREGLEKAQRLLKQSQKRDYYKILGVKRNAKKQEIIKAYRKLALQWHPDNFQSEEEKKKAEKKFIDIAAAKEVLSDPEMRRKFDDGEDPLDAETQQGGGSNPFHRSWDSWQGFNPFSSGGPFRFKFHFN.

Positions 1–31 are cleaved as a signal peptide; that stretch reads MVAPGSVRSRLGAVFPFLLVLVDLQYEGAEC. TPR repeat units follow at residues 37–70, 72–104, 105–138, 154–187, 188–221, 222–255, 268–301, 306–339, and 340–373; these read VEKHLELGKKLLAAGQLADALSQFHAAVDGDPDN, IAYYRRATVFLAMGKSKAALPDLTRVIELKMDF, TAARLQRGHLLLKQGRLAEAEDDFKKVLKSNPSE, MQRLRAQALDAFDSADYTAAITFLDEILEVCVWD, AELRELRAECFIKEGEPRKAISDLKAASKLKNDN, TEAFYKISILYYQLGDHELSLSEVRECLKLDQDH, LNKLIGSAEELIRDGRYTDATSKYESVMKAEPSV, VRSKERICHCFSKDEKPVEAIKICSEVLQLEPDN, and VNALKDRAEAYLIEEMYDEAIQDYEAAQEQNEND. Cys248 and Cys258 are joined by a disulfide. Ser274 bears the Phosphoserine mark. Cysteines 313 and 329 form a disulfide. The segment at 375-393 is flexible linker; it reads QIREGLEKAQRLLKQSQKR. The J domain maps to 394-462; the sequence is DYYKILGVKR…EMRRKFDDGE (69 aa). The tract at residues 451-481 is disordered; the sequence is DPEMRRKFDDGEDPLDAETQQGGGSNPFHRS. Ser475 carries the post-translational modification Phosphoserine.

As to quaternary structure, interacts with EIF2AK2 and EIF2AK3. Forms a trimeric complex with DNAJB1 and HSPA8. Interacts with THAP12.

It is found in the endoplasmic reticulum. Its function is as follows. Involved in the unfolded protein response (UPR) during ER stress. Co-chaperone of HSPA8/HSC70, it stimulates its ATPase activity. May inhibit both the autophosphorylation of EIF2AK2/PKR and the ability of EIF2AK2 to catalyze phosphorylation of the EIF2A. May inhibit EIF2AK3/PERK activity. In Rattus norvegicus (Rat), this protein is DnaJ homolog subfamily C member 3 (Dnajc3).